A 560-amino-acid polypeptide reads, in one-letter code: Tudor and KH domain-containing protein (560 aa).

2 KH domains span residues 52 to 115 and 124 to 190; these read DIEI…KAAI and PVFE…KHLI. Residues Lys-65, Lys-76, Lys-110, Lys-112, Lys-152, Lys-175, Lys-181, Lys-187, and Lys-193 each participate in a glycyl lysine isopeptide (Lys-Gly) (interchain with G-Cter in ubiquitin) cross-link. The disordered stretch occupies residues 211–230; sequence RVPRKQPISVRREEVTEPGG. Residues Lys-256 and Lys-267 each participate in a glycyl lysine isopeptide (Lys-Gly) (interchain with G-Cter in ubiquitin) cross-link. A disordered region spans residues 268–291; that stretch reads EGSWEKPNDDSFQNSGAQSSPETS. The span at 277-290 shows a compositional bias: polar residues; that stretch reads DSFQNSGAQSSPET. Ser-278 is modified (phosphoserine). Positions 353 to 412 constitute a Tudor domain; it reads TVHVGDIVAAPLSTNGSWYRARVLGTLENGNLDLYFVDFGDNGDCALKDLRALRSDFLSL. Residues Lys-479, Lys-510, and Lys-529 each participate in a glycyl lysine isopeptide (Lys-Gly) (interchain with G-Cter in ubiquitin) cross-link.

The protein belongs to the Tdrkh family. Interacts with (symmetrically methylated) PIWIL1, PIWIL2 and PIWIL4. Post-translationally, ubiquitinated by PRKN during mitophagy, leading to its degradation and enhancement of mitophagy. Deubiquitinated by USP30. Highly expressed in testis, present at lower level in brain. Weakly or not expressed in other tissues (at protein level).

It is found in the cytoplasm. It localises to the mitochondrion. Its function is as follows. Participates in the primary piRNA biogenesis pathway and is required during spermatogenesis to repress transposable elements and prevent their mobilization, which is essential for the germline integrity. The piRNA metabolic process mediates the repression of transposable elements during meiosis by forming complexes composed of piRNAs and Piwi proteins and govern the methylation and subsequent repression of transposons. Required for the final steps of primary piRNA biogenesis by participating in the processing of 31-37 nt intermediates into mature piRNAs. May act in pi-bodies and piP-bodies by transferring piRNA precursors or intermediates to or between these granules. The protein is Tudor and KH domain-containing protein (Tdrkh) of Mus musculus (Mouse).